The sequence spans 176 residues: Cytochrome b (176 aa).

The next 3 membrane-spanning stretches (helical) occupy residues 33-53, 77-98, and 113-133; these read FGSL…FLAM, WVLR…YLHV, and WNVG…GYVL. Residues His-83 and His-97 each coordinate heme b.

The protein belongs to the cytochrome b family. The cytochrome bc1 complex contains 11 subunits: 3 respiratory subunits (MT-CYB, CYC1 and UQCRFS1), 2 core proteins (UQCRC1 and UQCRC2) and 6 low-molecular weight proteins (UQCRH/QCR6, UQCRB/QCR7, UQCRQ/QCR8, UQCR10/QCR9, UQCR11/QCR10 and a cleavage product of UQCRFS1). This cytochrome bc1 complex then forms a dimer. The cofactor is heme b.

It localises to the mitochondrion inner membrane. Its function is as follows. Component of the ubiquinol-cytochrome c reductase complex (complex III or cytochrome b-c1 complex) that is part of the mitochondrial respiratory chain. The b-c1 complex mediates electron transfer from ubiquinol to cytochrome c. Contributes to the generation of a proton gradient across the mitochondrial membrane that is then used for ATP synthesis. This is Cytochrome b (MT-CYB) from Corynorhinus rafinesquii (Rafinesque's big-eared bat).